A 94-amino-acid polypeptide reads, in one-letter code: Secretoglobin family 1C member 1 (94 aa).

The signal sequence occupies residues 1-22 (MKGSSALLVALTVLCICGLTRA).

The protein belongs to the secretoglobin family. In terms of tissue distribution, expressed in the olfactory mucosa.

The protein localises to the secreted. The sequence is that of Secretoglobin family 1C member 1 (Scgb1c1) from Rattus norvegicus (Rat).